The chain runs to 332 residues: Phospho-N-acetylmuramoyl-pentapeptide-transferase (332 aa).

The next 10 membrane-spanning stretches (helical) occupy residues 3–23, 52–72, 74–94, 115–135, 140–160, 172–192, 197–217, 223–243, 248–268, and 311–331; these read FALM…PRFI, MGGT…ATAF, LLTG…VVGF, LALQ…GAGG, VFGH…FWLV, IDGL…VIAF, FDIL…FVYN, IFMG…ISIA, WTLL…MLQV, and VDFF…AILY.

This sequence belongs to the glycosyltransferase 4 family. MraY subfamily. Mg(2+) is required as a cofactor.

The protein resides in the cell membrane. It catalyses the reaction UDP-N-acetyl-alpha-D-muramoyl-L-alanyl-gamma-D-glutamyl-L-lysyl-D-alanyl-D-alanine + di-trans,octa-cis-undecaprenyl phosphate = Mur2Ac(oyl-L-Ala-gamma-D-Glu-L-Lys-D-Ala-D-Ala)-di-trans,octa-cis-undecaprenyl diphosphate + UMP. Its pathway is cell wall biogenesis; peptidoglycan biosynthesis. Its function is as follows. Catalyzes the initial step of the lipid cycle reactions in the biosynthesis of the cell wall peptidoglycan: transfers peptidoglycan precursor phospho-MurNAc-pentapeptide from UDP-MurNAc-pentapeptide onto the lipid carrier undecaprenyl phosphate, yielding undecaprenyl-pyrophosphoryl-MurNAc-pentapeptide, known as lipid I. This Streptococcus suis (strain 98HAH33) protein is Phospho-N-acetylmuramoyl-pentapeptide-transferase.